The following is a 273-amino-acid chain: Outer surface protein A (273 aa).

A signal peptide spans 1 to 16 (MKKYLLGIGLILALIA). Cysteine 17 is lipidated: N-palmitoyl cysteine. Cysteine 17 is lipidated: S-diacylglycerol cysteine.

This sequence belongs to the OspA lipoprotein family.

The protein resides in the cell outer membrane. Its subcellular location is the cell surface. The sequence is that of Outer surface protein A from Borreliella burgdorferi (Lyme disease spirochete).